We begin with the raw amino-acid sequence, 345 residues long: MVDVNRLKEEVIASYREICKENYRLLVFIVGPPGSGKSTIAEKLKDAINTSYLDYLKEIDRKTLRCENYNHINIDQFVQGIEGETISSALEDERHENFDSVENVDFICKKKRLKDGSYTITGRGGQLNAIKVRQPTSQEKNLEGNTTIAEVLPMDGFHLSRECLDHFSDPQWAHLRRGSSLTFDSNNFLKLCEIMAKTSRIFPSIGYDGDDFTAFDAISSSFDCSVPSVEVPGFDHSLKDPQPSQHTISFKSRIVIFEGLYLLYNKENWSKIYNIVSNSNAKLFYKILACEDQIESRVAKRHLKAGLVASIEDGKDKFRKNDLLNARDVEKNSISSEDIRLIRND.

31–39 serves as a coordination point for ATP; the sequence is GPPGSGKST.

This sequence belongs to the YFH7 family.

ATP-dependent kinase that could be involved in endoplasmic reticulum membrane assembly. The sequence is that of ATP-dependent kinase YFH7 (YFH7) from Candida glabrata (strain ATCC 2001 / BCRC 20586 / JCM 3761 / NBRC 0622 / NRRL Y-65 / CBS 138) (Yeast).